We begin with the raw amino-acid sequence, 199 residues long: Probable GTP-binding protein EngB (199 aa).

In terms of domain architecture, EngB-type G spans 28–199; that stretch reads DLPEIALAGR…DSWDAILEQV (172 aa). Residues 36 to 43, 63 to 67, 81 to 84, 148 to 151, and 180 to 182 contribute to the GTP site; these read GRSNVGKS, GKTQL, DVPG, TKAD, and FSS. The Mg(2+) site is built by Ser43 and Thr65.

The protein belongs to the TRAFAC class TrmE-Era-EngA-EngB-Septin-like GTPase superfamily. EngB GTPase family. Mg(2+) is required as a cofactor.

Functionally, necessary for normal cell division and for the maintenance of normal septation. This is Probable GTP-binding protein EngB from Streptococcus pyogenes serotype M28 (strain MGAS6180).